The chain runs to 138 residues: uncharacterized protein (138 aa).

It localises to the plastid. The protein localises to the chloroplast. This is an uncharacterized protein from Chlorella vulgaris (Green alga).